The chain runs to 592 residues: A-type ATP synthase subunit A (592 aa).

Residue 234–241 coordinates ATP; it reads GPFGSGKT.

The protein belongs to the ATPase alpha/beta chains family. In terms of assembly, has multiple subunits with at least A(3), B(3), C, D, E, F, H, I and proteolipid K(x).

The protein resides in the cell membrane. It catalyses the reaction ATP + H2O + 4 H(+)(in) = ADP + phosphate + 5 H(+)(out). Produces ATP from ADP in the presence of a proton gradient across the membrane. The archaeal alpha chain is a catalytic subunit. In terms of biological role, component of the A-type ATP synthase that produces ATP from ADP in the presence of a proton gradient across the membrane. The A chain is the catalytic subunit. This chain is A-type ATP synthase subunit A, found in Sulfolobus acidocaldarius (strain ATCC 33909 / DSM 639 / JCM 8929 / NBRC 15157 / NCIMB 11770).